The sequence spans 141 residues: Hemoglobin subunit alpha-D (141 aa).

The Globin domain maps to 1-141 (MLTADDKKLL…VAAVLAEKYR (141 aa)). Positions 58 and 87 each coordinate heme b.

The protein belongs to the globin family. As to quaternary structure, heterotetramer of two alpha-D chains and two beta chains. Red blood cells.

In terms of biological role, involved in oxygen transport from the lung to the various peripheral tissues. The chain is Hemoglobin subunit alpha-D (HBAD) from Anser anser anser (Western greylag goose).